Consider the following 271-residue polypeptide: Putative phosphoenolpyruvate synthase regulatory protein (271 aa).

151–158 is a binding site for ADP; that stretch reads GVSRSGKT.

This sequence belongs to the pyruvate, phosphate/water dikinase regulatory protein family. PSRP subfamily.

It carries out the reaction [pyruvate, water dikinase] + ADP = [pyruvate, water dikinase]-phosphate + AMP + H(+). The enzyme catalyses [pyruvate, water dikinase]-phosphate + phosphate + H(+) = [pyruvate, water dikinase] + diphosphate. In terms of biological role, bifunctional serine/threonine kinase and phosphorylase involved in the regulation of the phosphoenolpyruvate synthase (PEPS) by catalyzing its phosphorylation/dephosphorylation. In Burkholderia mallei (strain NCTC 10247), this protein is Putative phosphoenolpyruvate synthase regulatory protein.